We begin with the raw amino-acid sequence, 195 residues long: HTH-type transcriptional regulator BetI (195 aa).

Residues 8–68 enclose the HTH tetR-type domain; it reads EIRRAQLIDA…ATMRHVLRDL (61 aa). The segment at residues 31-50 is a DNA-binding region (H-T-H motif); the sequence is TLASVAQRASISTGIVSHYF.

It functions in the pathway amine and polyamine biosynthesis; betaine biosynthesis via choline pathway [regulation]. Repressor involved in the biosynthesis of the osmoprotectant glycine betaine. It represses transcription of the choline transporter BetT and the genes of BetAB involved in the synthesis of glycine betaine. The protein is HTH-type transcriptional regulator BetI of Paraburkholderia phytofirmans (strain DSM 17436 / LMG 22146 / PsJN) (Burkholderia phytofirmans).